Reading from the N-terminus, the 551-residue chain is Interleukin-2 receptor subunit beta (551 aa).

A signal peptide spans 1-26 (MAAPALSWRLPLLILLLPLATPWASA). The Extracellular portion of the chain corresponds to 27–240 (TVNGTSQFTC…TKPASLGKDT (214 aa)). N-linked (GlcNAc...) asparagine glycans are attached at residues N29, N43, and N71. A disulfide bond links C36 and C46. The cysteines at positions 74 and 86 are disulfide-linked. One can recognise a Fibronectin type-III domain in the interval 134–234 (APISLQVVHV…QPLAFRTKPA (101 aa)). N-linked (GlcNAc...) asparagine glycosylation occurs at N149. A WSXWS motif motif is present at residues 220 to 224 (WSPWS). A helical transmembrane segment spans residues 241–265 (IPWLGHLLVGLSGAFGFIILVYLLI). The Cytoplasmic segment spans residues 266–551 (NCRNTGPWLK…LQGQDPTHLV (286 aa)). Positions 278-286 (LKCHTPDPS) match the Box 1 motif motif. Disordered regions lie at residues 393 to 412 (DEGV…QPLS) and 433 to 476 (SLLG…GPPT).

Belongs to the type I cytokine receptor family. Type 4 subfamily. Non-covalent dimer of an alpha and a beta subunit. IL2R exists in 3 different forms: a high affinity dimer, an intermediate affinity monomer (beta subunit), and a low affinity monomer (alpha subunit). The high and intermediate affinity forms also associate with a gamma subunit. Interacts with SHB upon interleukin stimulation.

Its subcellular location is the cell membrane. It localises to the cell surface. Functionally, receptor for interleukin-2. This beta subunit is involved in receptor mediated endocytosis and transduces the mitogenic signals of IL2. Probably in association with IL15RA, involved in the stimulation of neutrophil phagocytosis by IL15. The chain is Interleukin-2 receptor subunit beta (IL2RB) from Pan troglodytes (Chimpanzee).